Consider the following 301-residue polypeptide: Glutamyl-Q tRNA(Asp) synthetase (301 aa).

L-glutamate-binding positions include 9 to 13 (RFAPS) and glutamate 45. The short motif at 12-22 (PSPTGPLHLGS) is the 'HIGH' region element. The Zn(2+) site is built by cysteine 101, cysteine 103, tyrosine 121, and cysteine 125. L-glutamate is bound by residues tyrosine 179 and arginine 197. The 'KMSKS' region motif lies at 235-239 (KLSKQ). Lysine 238 contributes to the ATP binding site.

It belongs to the class-I aminoacyl-tRNA synthetase family. GluQ subfamily. Zn(2+) is required as a cofactor.

Catalyzes the tRNA-independent activation of glutamate in presence of ATP and the subsequent transfer of glutamate onto a tRNA(Asp). Glutamate is transferred on the 2-amino-5-(4,5-dihydroxy-2-cyclopenten-1-yl) moiety of the queuosine in the wobble position of the QUC anticodon. The sequence is that of Glutamyl-Q tRNA(Asp) synthetase from Thiobacillus denitrificans (strain ATCC 25259 / T1).